A 2320-amino-acid chain; its full sequence is MAPKKEKPTGSANYKIWEPSLIAAHLNQNDWKASIAFVVGNRVEDDLLIHALDLAVRLPQRKLFSIVSWEDILQQMDEIQSLAESASAKKGKKPTSVNLPLHYEVFLAAKIIMESGEKLTLPLIGKLLKCQLLHIKSKDQQRRENEKKMVEERTKSEKDKGKGKSPKEKKVASAKPGKGKSKDQPEATVTVRKTTQLKRRGEDDEAKSYIDDEPDDGAQYYIIVVGFNNPQLLAIMTELGIPITSVIKISSENYEPLQTHLAAVRQQQEAVLQPEDIEAEKLKRKNSIKELEVFWKYLEPILNNEKLEIHLFDVARLQYMVKATYFPSDWSDNEQMLALGTEIFENIACLMYDSLDWKRQHHHYLQSMQLINVPQVVSEKTVLEAITIPEPPPSTAPAPTGKKKAQYEESHAPPTVAFIITTEVDMRYYNDLLNPIPEEFISVSLILHCMVEQVVATEEDLIPPSLVEPAPRADGLDYRIAAHIVSILPSLCLSEKEKKNLREIFLTEGESESKALPKGPLLLNYHDAHAHKKYALKDQKNFDPVQVEQEMQSKLPLWEFLQFPLPPPWNSTKRLATIHELMHFCTNEVLSWNEVERAFKVFTFESLKLSEVDEEGRLKPTETTSDTDVENFNIPWDNPARFAKLIRQRYIHRMSMQKAPPVVVEIENTERTLFVNKNFAKAEQDAQGDENSPNSDEPDAISVTGSTSNSTKPWNSSNRQFSEKETSGSMWPQPESMDQTMDTEIKDDAATKDDSPEKKPKKMVVEADIEDIKKTQQRSLMDWSFTEYFQPKVLLQVLQEAHQQYRCVDSYYHTQDNSLLLVFHNPMNLQRLQCEHWNIALHSNVGFRNYLELVAKSIEDWVTQEEAKYQEAKMAEELNRIRIELELKATVKTSASKIPGPKRSKTNKVSSKTELSDQEKDKEKEKDKIPFVLEGSLKAWKEEQERLAEEERLKEEKKAEKKGKDTGKKKGKDKADKDDAKALKKKSSSKEKPKEEPAKTLEVIEETAPLPVPEVVYPFRGYNMGDIPIQISGTNYYLYPSDGGQIEVEKTRFERGSTFIKVKVKKDKHNFIIHLKDPKEIVKKEKEEKNSEEEEEEEEEKEEVEEKKPKEGEEEKVKQKVEMKRAQIEKEAVSKFGSFSATLENGICLSISYYGSNGMAPEVINSELEAMMNIPSAMTATVVPAVVTVPQGKGKAKPKGKEKHKDSIKEEELPKEEEKKNHIQEEVEPEIVIQESPPYVPTFQNLNVSCPSGLLLTFIGQESTDYSIVDEEPTRNLMIRQSYPQRLKHYEFYKAVMPPLEQEASRVVTSQGTVIKYMLDGSTQILFADGAVSSSPDSGPVYTSPELPTSPHNGDLVDSASQPKSETGPEIIITKKGKGHKNQTVANKSETHDIIPEVPPPTPVESHIGTWFTTTPDGRRIGTKGLEKIEDLKPYLFFQATDPINGTVMTTREDKVIIVEKKDGTRVVDHADGTRITTFYQVYEDHITPSNDEETTEGPRTVTRQVKCMRIESSHYATIITNCEDSSCCATFGDGTSIIAKPQGSYQVLPPNTGCLYIDKDCSATYCHESSNNLYHPFQKREQLRASRYIMKHTSEVICEVQDPEGNTFQVMADGSVSTTLPKKKLEDDFNVQMEGYESLSSLHLEKNHMQIYGEHVPRFFVVYTDGSGVELLRDSDIEEYLSLAYGESTTVVLQEPVQEYPGALSITVLRPFHEASQWIMKKELDTIVPPNLQSRSWERFPSVEKKTPGPPFGTQIWKGLSIGSKQLTNIPAPILEGPKVLQMRQFIQHEVIKNEVKLKLQISLKDYINHILKKEDELQEMTVKDSRTEEERGNAADLLKLVMSFPKMEETTKSHMTKVAAHLTVLFKQSMASAPKCSPDSYSKEFLEKKWRSLSQGTSWKEKLEQQRNNIKKTQSYLMQIKTKEVTPYFKSELSSLFKSKYDYLEKFSKSLPPFVKKNEAKLMTAVPDLYSDSTLTVDTEKEASNTHPLLNQEVAENIQESPREKETEYVNKSLQTSSSQNQYENVTISPKESVYQSQTEIETKDTKESAIQNFTEKFKKYTKKSASQNEIEDLIKSTKESVSQRQTENVTRPPTEEPDIYMPIKIPTQSLLQDVTGQARKEKVRLPYYMMSSKPKSQPYAKVEDPVGGRVNTSSIASAAMYNPNASPFGFHLLPPSVKFGVLKEGHTYATIVKLKNVGVDFCRFRVKQPPPSTGLKVTYKPGPVAAGLQAELKVELFAMAVGEDGAKGSAHISHNIEIMTEHDVLFLPVEATVLTSSNYDNRPKNLPQGKENPMVFRTSTISSSSLGVVMSQKATHH.

Composition is skewed to basic and acidic residues over residues 139 to 171 (DQQR…EKKV) and 199 to 210 (RRGEDDEAKSYI). 11 disordered regions span residues 139-211 (DQQR…SYID), 388-407 (IPEP…KAQY), 682-739 (AEQD…SMDQ), 894-928 (SASK…EKDK), 950-1001 (EERL…AKTL), 1084-1118 (KEKE…EKVK), 1191-1221 (QGKG…EKKN), 1334-1367 (SSPD…KSET), 1393-1416 (DIIP…TTTP), 1983-2028 (KEAS…YENV), and 2080-2101 (TKES…EEPD). Positions 703-720 (VTGSTSNSTKPWNSSNRQ) are enriched in polar residues. Residues 865 to 965 (EEAKYQEAKM…EKKAEKKGKD (101 aa)) are a coiled coil. Composition is skewed to basic and acidic residues over residues 914 to 928 (ELSD…EKDK) and 950 to 999 (EERL…EPAK). The segment covering 1090–1103 (NSEEEEEEEEEKEE) has biased composition (acidic residues). Composition is skewed to basic and acidic residues over residues 1104–1118 (VEEK…EKVK) and 1203–1221 (KHKD…EKKN). Polar residues-rich tracts occupy residues 2012 to 2028 (VNKS…YENV) and 2082 to 2094 (ESVS…NVTR).

In terms of assembly, interacts (via the C-terminus) with SPAG6; the interaction probably occurs on polymerized microtubules. As to expression, highly expressed in testis, round spermatids, testicular sperm, epididymal sperm and in condensing spermatids (at protein level). Expressed in organs that contain cilia-bearing cells including brain, oviduct, lung, and uterus. Expressed in articular cartilage and bone.

The protein resides in the cytoplasm. It localises to the cytoskeleton. Its subcellular location is the flagellum axoneme. The protein localises to the cytoplasmic vesicle. It is found in the secretory vesicle. The protein resides in the acrosome. It localises to the golgi apparatus. Functionally, component of the central pair apparatus of ciliary axonemes. Plays a critical role in the function and structure of motile cilia. May play a role in endochondral bone formation, most likely because of a function in primary cilia of chondrocytes and osteoblasts. Essential for normal spermatogenesis and male fertility. Required for normal manchette structure, transport of proteins along the manchette microtubules and formation of the sperm head and flagellum. Essential for sperm flagellum development and proper assembly of the respiratory motile cilia central pair apparatus, but not the brain ependymal cilia. The chain is Sperm-associated antigen 17 (Spag17) from Mus musculus (Mouse).